The following is a 299-amino-acid chain: ATP phosphoribosyltransferase (299 aa).

It belongs to the ATP phosphoribosyltransferase family. Long subfamily. In terms of assembly, equilibrium between an active dimeric form, an inactive hexameric form and higher aggregates. Interconversion between the various forms is largely reversible and is influenced by the natural substrates and inhibitors of the enzyme. Requires Mg(2+) as cofactor.

The protein resides in the cytoplasm. It carries out the reaction 1-(5-phospho-beta-D-ribosyl)-ATP + diphosphate = 5-phospho-alpha-D-ribose 1-diphosphate + ATP. Its pathway is amino-acid biosynthesis; L-histidine biosynthesis; L-histidine from 5-phospho-alpha-D-ribose 1-diphosphate: step 1/9. With respect to regulation, feedback inhibited by histidine. In terms of biological role, catalyzes the condensation of ATP and 5-phosphoribose 1-diphosphate to form N'-(5'-phosphoribosyl)-ATP (PR-ATP). Has a crucial role in the pathway because the rate of histidine biosynthesis seems to be controlled primarily by regulation of HisG enzymatic activity. The polypeptide is ATP phosphoribosyltransferase (hisG) (Buchnera aphidicola subsp. Schizaphis graminum (strain Sg)).